The chain runs to 646 residues: MDDIDAMFSDMLQEMDLLTQSLDAEVDSAPLAKPPTIPEPQEMNFSIGFANFNESLNDLEDNDLDALMADLVADISATEEKFATERDTSKGSVPVAPAPSKPQSNFSLPASFDSSKPATSSNSIAAPPPPPAFKPSKEEEEEQLKADKIKLALEKLKEAKVKKLVVKVEITDGSSKTLMVDERQTVRDVMDNLFEKTHCDCNVDWSVCETNPDLQTERAFEDHENLVEPLSTWTRDTENKVLFQEKKHKYEVFKNPQIFYLWKKDKKSLKDMKEKDKEQLLEENFCGASVIVPDLEGVLYLKEDGKKSWKQRYFLLRASGLYYSPKGKTKASRDLVCLVQFDNVNVYYCKEYRIKYKAPTDHCFMLKHPQIQKESQYIKFMCCDDEWSMNLWVTGIRVAKYGKQLYDNYKAAVRKASGSASWANRTIQASSTASTPSPTPKAKAANGHAPQPPVENKVPSNQSSLPPPPPSMDFLPPPPPDPMFPPPPPAPPAPPAPPVPVSSTKVNKFPPPPKFPQSSFPPPPMDDLPPPPPPPEIADLPPDFLPPPPPSFVSHGGESLPPPPPDPVASLPPPPPAFTSAGGAPPPPPPPPPPPAPAPAVNNPAGSVRKVAPPPPKRTTPQLAAPSGGDFMSELMNAMQKKRTQP.

The segment at 82-141 (FATERDTSKGSVPVAPAPSKPQSNFSLPASFDSSKPATSSNSIAAPPPPPAFKPSKEEEE) is disordered. The segment covering 101–116 (KPQSNFSLPASFDSSK) has biased composition (polar residues). Positions 162-248 (KKLVVKVEIT…NKVLFQEKKH (87 aa)) constitute a Ras-associating domain. Positions 292-401 (VPDLEGVLYL…WVTGIRVAKY (110 aa)) constitute a PH domain. The interval 420 to 646 (ASWANRTIQA…NAMQKKRTQP (227 aa)) is disordered. Residues 429-445 (ASSTASTPSPTPKAKAA) show a composition bias toward low complexity. Pro residues-rich tracts occupy residues 465-500 (LPPPPPSMDFLPPPPPDPMFPPPPPAPPAPPAPPVP), 509-536 (FPPPPKFPQSSFPPPPMDDLPPPPPPPE), 560-577 (LPPPPPDPVASLPPPPPA), and 584-598 (APPPPPPPPPPPAPA).

Belongs to the MRL family.

It localises to the cell membrane. It is found in the cytoplasm. The protein resides in the cytoskeleton. In terms of biological role, appears to function in the signal transduction from Ras activation to actin cytoskeletal remodeling. The sequence is that of Amyloid beta A4 precursor protein-binding family B member 1-interacting protein (apbb1ip) from Danio rerio (Zebrafish).